A 962-amino-acid polypeptide reads, in one-letter code: UPF0182 protein SACE_1102 (962 aa).

7 helical membrane passes run isoleucine 10–glycine 30, leucine 55–isoleucine 75, leucine 106–aspartate 126, phenylalanine 168–isoleucine 188, isoleucine 203–aspartate 223, valine 250–phenylalanine 270, and isoleucine 279–leucine 299. 2 disordered regions span residues arginine 707–glutamine 730 and phenylalanine 876–lysine 916. The span at glycine 899 to glycine 910 shows a compositional bias: pro residues.

The protein belongs to the UPF0182 family.

It is found in the cell membrane. This is UPF0182 protein SACE_1102 from Saccharopolyspora erythraea (strain ATCC 11635 / DSM 40517 / JCM 4748 / NBRC 13426 / NCIMB 8594 / NRRL 2338).